Reading from the N-terminus, the 95-residue chain is Putative membrane protein insertion efficiency factor (95 aa).

A disordered region spans residues 72–95 (FDPVPDAPTSPSPSSSCSCKGPHP). Residues 83 to 95 (SPSSSCSCKGPHP) are compositionally biased toward low complexity.

The protein belongs to the UPF0161 family.

It localises to the cell inner membrane. Could be involved in insertion of integral membrane proteins into the membrane. The protein is Putative membrane protein insertion efficiency factor of Xanthomonas axonopodis pv. citri (strain 306).